Here is a 120-residue protein sequence, read N- to C-terminus: UPF0344 protein lin2366 (120 aa).

A run of 4 helical transmembrane segments spans residues glycine 3 to isoleucine 23, methionine 33 to valine 53, isoleucine 62 to leucine 82, and glycine 92 to leucine 112.

It belongs to the UPF0344 family.

It is found in the cell membrane. The chain is UPF0344 protein lin2366 from Listeria innocua serovar 6a (strain ATCC BAA-680 / CLIP 11262).